The following is a 199-amino-acid chain: MTGFKQHKGIAVPLDSANVDTDAIIPKQFLQKVNRIGFGKHLFHDWRFLDDAGQQPNPEFVLNQPRYAGASILLARENFGCGSSREHAPWALADYGFKTLIASSFADIFYGNAINNGLVPVRLKEEEVDLLFQLVATQPGIEIEVDLEANQVRAGELSFGFEIDEFRRYCLLNGLDAIGLTLQHEATISAFEAKQPSWI.

This sequence belongs to the LeuD family. LeuD type 1 subfamily. In terms of assembly, heterodimer of LeuC and LeuD.

The enzyme catalyses (2R,3S)-3-isopropylmalate = (2S)-2-isopropylmalate. The protein operates within amino-acid biosynthesis; L-leucine biosynthesis; L-leucine from 3-methyl-2-oxobutanoate: step 2/4. Catalyzes the isomerization between 2-isopropylmalate and 3-isopropylmalate, via the formation of 2-isopropylmaleate. In Aeromonas salmonicida (strain A449), this protein is 3-isopropylmalate dehydratase small subunit.